Here is a 208-residue protein sequence, read N- to C-terminus: FMN-dependent NADH:quinone oxidoreductase 4 (208 aa).

Belongs to the azoreductase type 1 family. As to quaternary structure, homodimer. Requires FMN as cofactor.

The enzyme catalyses 2 a quinone + NADH + H(+) = 2 a 1,4-benzosemiquinone + NAD(+). It carries out the reaction N,N-dimethyl-1,4-phenylenediamine + anthranilate + 2 NAD(+) = 2-(4-dimethylaminophenyl)diazenylbenzoate + 2 NADH + 2 H(+). Its function is as follows. Quinone reductase that provides resistance to thiol-specific stress caused by electrophilic quinones. Also exhibits azoreductase activity. Catalyzes the reductive cleavage of the azo bond in aromatic azo compounds to the corresponding amines. This chain is FMN-dependent NADH:quinone oxidoreductase 4, found in Bacillus anthracis.